Here is a 213-residue protein sequence, read N- to C-terminus: Na(+)-translocating NADH-quinone reductase subunit D (213 aa).

The next 6 helical transmembrane spans lie at 21-41, 42-62, 69-86, 101-121, 131-151, and 183-203; these read PLIA…VNTA, ITMG…VSLL, SVRM…VIVI, LSVF…AESL, FLDG…VSIV, and FGLM…IWGV.

Belongs to the NqrDE/RnfAE family. As to quaternary structure, composed of six subunits; NqrA, NqrB, NqrC, NqrD, NqrE and NqrF.

It is found in the cell inner membrane. It catalyses the reaction a ubiquinone + n Na(+)(in) + NADH + H(+) = a ubiquinol + n Na(+)(out) + NAD(+). In terms of biological role, NQR complex catalyzes the reduction of ubiquinone-1 to ubiquinol by two successive reactions, coupled with the transport of Na(+) ions from the cytoplasm to the periplasm. NqrA to NqrE are probably involved in the second step, the conversion of ubisemiquinone to ubiquinol. The chain is Na(+)-translocating NADH-quinone reductase subunit D from Chlamydia caviae (strain ATCC VR-813 / DSM 19441 / 03DC25 / GPIC) (Chlamydophila caviae).